Here is a 406-residue protein sequence, read N- to C-terminus: Mitochondrial ribosome-associated GTPase 2 (406 aa).

Residues 15-406 (FEGVGHWALS…LGQGRQPLRW (392 aa)) are localized in the mitochondria. Positions 30–406 (KPSRLLPQQA…LGQGRQPLRW (377 aa)) are not localized in the mitochondria. Residues 70 to 224 (RYFVDYRRVL…RVLHLELKTV (155 aa)) enclose the Obg domain. Residues 225–390 (AHAGMVGFPN…LLLHLKVLYD (166 aa)) form the OBG-type G domain. Residues 231 to 238 (GFPNAGKS), 256 to 260 (FTTLK), 278 to 281 (DIPG), 345 to 348 (NKID), and 371 to 373 (SAL) each bind GTP. Residues S238 and T258 each coordinate Mg(2+).

This sequence belongs to the TRAFAC class OBG-HflX-like GTPase superfamily. OBG GTPase family. As to quaternary structure, associates with the mitochondrial ribosome large subunit; the association occurs in a GTP-dependent manner. Requires Mg(2+) as cofactor.

The protein localises to the mitochondrion. It localises to the mitochondrion inner membrane. In terms of biological role, plays a role in the regulation of the mitochondrial ribosome assembly and of translational activity. Displays GTPase activity. Involved in the ribosome maturation process. The protein is Mitochondrial ribosome-associated GTPase 2 (MTG2) of Pongo abelii (Sumatran orangutan).